A 774-amino-acid chain; its full sequence is Penicillin acylase 2 proenzyme (774 aa).

The active-site Nucleophile is S240.

It belongs to the peptidase S45 family. In terms of assembly, heterodimer of a small subunit and a large subunit processed from the same precursor.

The enzyme catalyses a penicillin + H2O = 6-aminopenicillanate + a carboxylate. The protein is Penicillin acylase 2 proenzyme (acyII) of Pseudomonas sp. (strain SE83).